A 496-amino-acid chain; its full sequence is Glutamyl-tRNA(Gln) amidotransferase subunit A (496 aa).

Catalysis depends on charge relay system residues Lys79 and Ser159. Residue Ser183 is the Acyl-ester intermediate of the active site.

It belongs to the amidase family. GatA subfamily. Heterotrimer of A, B and C subunits.

It carries out the reaction L-glutamyl-tRNA(Gln) + L-glutamine + ATP + H2O = L-glutaminyl-tRNA(Gln) + L-glutamate + ADP + phosphate + H(+). Its function is as follows. Allows the formation of correctly charged Gln-tRNA(Gln) through the transamidation of misacylated Glu-tRNA(Gln) in organisms which lack glutaminyl-tRNA synthetase. The reaction takes place in the presence of glutamine and ATP through an activated gamma-phospho-Glu-tRNA(Gln). The protein is Glutamyl-tRNA(Gln) amidotransferase subunit A of Bartonella quintana (strain Toulouse) (Rochalimaea quintana).